Reading from the N-terminus, the 492-residue chain is 3-octaprenyl-4-hydroxybenzoate carboxy-lyase (492 aa).

Position 175 (Asn-175) interacts with Mn(2+). Residues 178–180 (IYR), 192–194 (RWL), and 197–198 (RG) contribute to the prenylated FMN site. Position 241 (Glu-241) interacts with Mn(2+). Asp-290 (proton donor) is an active-site residue.

It belongs to the UbiD family. As to quaternary structure, homohexamer. It depends on prenylated FMN as a cofactor. Mn(2+) is required as a cofactor.

The protein resides in the cell membrane. The catalysed reaction is a 4-hydroxy-3-(all-trans-polyprenyl)benzoate + H(+) = a 2-(all-trans-polyprenyl)phenol + CO2. The protein operates within cofactor biosynthesis; ubiquinone biosynthesis. Catalyzes the decarboxylation of 3-octaprenyl-4-hydroxy benzoate to 2-octaprenylphenol, an intermediate step in ubiquinone biosynthesis. The polypeptide is 3-octaprenyl-4-hydroxybenzoate carboxy-lyase (Salmonella typhi).